We begin with the raw amino-acid sequence, 409 residues long: Putative competence-damage inducible protein (409 aa).

Belongs to the CinA family.

The polypeptide is Putative competence-damage inducible protein (Clostridium botulinum (strain Loch Maree / Type A3)).